The primary structure comprises 244 residues: 1-(5-phosphoribosyl)-5-[(5-phosphoribosylamino)methylideneamino] imidazole-4-carboxamide isomerase (244 aa).

Catalysis depends on Asp-8, which acts as the Proton acceptor. Asp-130 acts as the Proton donor in catalysis.

Belongs to the HisA/HisF family.

The protein resides in the cytoplasm. It catalyses the reaction 1-(5-phospho-beta-D-ribosyl)-5-[(5-phospho-beta-D-ribosylamino)methylideneamino]imidazole-4-carboxamide = 5-[(5-phospho-1-deoxy-D-ribulos-1-ylimino)methylamino]-1-(5-phospho-beta-D-ribosyl)imidazole-4-carboxamide. Its pathway is amino-acid biosynthesis; L-histidine biosynthesis; L-histidine from 5-phospho-alpha-D-ribose 1-diphosphate: step 4/9. The chain is 1-(5-phosphoribosyl)-5-[(5-phosphoribosylamino)methylideneamino] imidazole-4-carboxamide isomerase from Syntrophomonas wolfei subsp. wolfei (strain DSM 2245B / Goettingen).